The chain runs to 905 residues: Translation initiation factor IF-2 (905 aa).

3 disordered regions span residues 52 to 84 (QSHG…SKSV), 116 to 230 (AKKR…QKKT), and 269 to 318 (FEKE…FEKP). Residues 65-84 (KSKTTSTARVTGSSGKSKSV) show a composition bias toward polar residues. Positions 116–138 (AKKRAEEEAKKREQVKKEAEERQ) are enriched in basic and acidic residues. Residues 165 to 178 (VVVKKGSKAAAAAK) show a composition bias toward low complexity. 2 stretches are compositionally biased toward basic and acidic residues: residues 190–230 (PKVE…QKKT) and 269–278 (FEKERREIKR). The region spanning 406–575 (TRPPVVTIMG…NLQAELMELE (170 aa)) is the tr-type G domain. The segment at 415 to 422 (GHVDHGKT) is G1. 415-422 (GHVDHGKT) contributes to the GTP binding site. The interval 440 to 444 (GITQH) is G2. Positions 461 to 464 (DTPG) are G3. Residues 461-465 (DTPGH) and 515-518 (NKMD) each bind GTP. The tract at residues 515–518 (NKMD) is G4. Positions 551 to 553 (SAK) are G5.

The protein belongs to the TRAFAC class translation factor GTPase superfamily. Classic translation factor GTPase family. IF-2 subfamily.

The protein localises to the cytoplasm. One of the essential components for the initiation of protein synthesis. Protects formylmethionyl-tRNA from spontaneous hydrolysis and promotes its binding to the 30S ribosomal subunits. Also involved in the hydrolysis of GTP during the formation of the 70S ribosomal complex. The polypeptide is Translation initiation factor IF-2 (Psychrobacter sp. (strain PRwf-1)).